Reading from the N-terminus, the 985-residue chain is MDRRSMGETESGDAFLDLKKPPASKCPHRYTKEELLDIKELPHSKQRPSCLSEKYDSDGVWDPEKWHASLYPASGRSSPVESLKKELDTDRPSLVRRIVDPRERVKEDDLDVVLSPQRRSFGGGCHVTAAVSSRRSGSPLEKDSDGLRLLGGRRIGSGRIISARTFEKDHRLSDKDLRDLRDRDRERDFKDKRFRREFGDSKRVFGERRRNDSYTEEEPEWFSAGPTSQSETIELTGFDDKILEEDHKGRKRTRRRTASVKEGIVECNGGVAEEDEVEVILAQEPAADQEVPRDAVLPEQSPGDFDFNEFFNLDKVPCLASMIEDVLGEGSVSASRFSRWFSNPSRSGSRSSSLGSTPHEELERLAGLEQAILSPGQNSGNYFAPIPLEDHAENKVDILEMLQKAKVDLKPLLSSLSANKEKLKESSHSGVVLSVEEVEAGLKGLKVDQQVKNSTPFMAEHLEETLSAVTNNRQLKKDGDMTAFNKLVSTMKASGTLPSQPKVSRNLESHLMSPAEIPGQPVPKNILQELLGQPVQRPASSNLLSGLMGSLEPTTSLLGQRAPSPPLSQVFQTRAASADYLRPRIPSPIGFTPGPQQLLGDPFQGMRKPMSPITAQMSQLELQQAALEGLALPHDLAVQAANFYQPGFGKPQVDRTRDGFRNRQQRVTKSPAPVHRGNSSSPAPAASITSMLSPSFTPTSVIRKMYESKEKSKEEPASGKAALGDSKEDTQKASEENLLSSSSVPSADRDSSPTTNSKLSALQRSSCSTPLSQANRYTKEQDYRPKATGRKTPTLASPVPTTPFLRPVHQVPLVPHVPMVRPAHQLHPGLVQRMLAQGVHPQHLPSLLQTGVLPPGMDLSHLQGISGPILGQPFYPLPAASHPLLNPRPGTPLHLAMVQQQLQRSVLHPPGSGSHAAAVSVQTTPQNVPSRSGLPHMHSQLEHRPSQRSSSPVGLAKWFGSDVLQQPLPSMPAKVISVDELEYRQ.

Residues 1-24 are disordered; that stretch reads MDRRSMGETESGDAFLDLKKPPAS. The residue at position 5 (Ser-5) is a Phosphoserine. The short motif at 30–36 is the YXXXXLphi motif element; that stretch reads YTKEELL. 6 positions are modified to phosphoserine: Ser-74, Ser-78, Ser-115, Ser-120, Ser-136, and Ser-138. The segment at 131–161 is interaction with CSDE1; it reads VSSRRSGSPLEKDSDGLRLLGGRRIGSGRII. The Nuclear localization signal signature appears at 195-211; sequence RREFGDSKRVFGERRRN. The interval 208 to 230 is disordered; that stretch reads RRRNDSYTEEEPEWFSAGPTSQS. The interval 219–240 is interaction with DDX6; sequence PEWFSAGPTSQSETIELTGFDD. Phosphoserine is present on residues Ser-301, Ser-345, Ser-353, and Ser-374. Lys-410 is covalently cross-linked (Glycyl lysine isopeptide (Lys-Gly) (interchain with G-Cter in SUMO2)). Ser-417 carries the post-translational modification Phosphoserine. The Nuclear export signal signature appears at 438-447; that stretch reads VEAGLKGLKV. An interaction with LSM14A region spans residues 448–490; sequence DQQVKNSTPFMAEHLEETLSAVTNNRQLKKDGDMTAFNKLVST. Lys-486 is subject to N6-acetyllysine. Ser-513, Ser-564, and Ser-587 each carry phosphoserine. A Nuclear export signal motif is present at residues 613-638; the sequence is ITAQMSQLELQQAALEGLALPHDLAV. 2 disordered regions span residues 664-693 and 707-803; these read QQRV…SMLS and ESKE…PTTP. Ser-693 is subject to Phosphoserine. The interaction with PATL1 stretch occupies residues 695–713; that stretch reads SFTPTSVIRKMYESKEKSK. Basic and acidic residues-rich tracts occupy residues 707-717 and 725-735; these read ESKEKSKEEPA and DSKEDTQKASE. Residues 736–746 are compositionally biased toward low complexity; it reads ENLLSSSSVPS. The residue at position 752 (Ser-752) is a Phosphoserine. Positions 754–776 are enriched in polar residues; the sequence is TTNSKLSALQRSSCSTPLSQANR. Residues Ser-920 and Ser-951 each carry the phosphoserine modification. A disordered region spans residues 922 to 953; sequence QTTPQNVPSRSGLPHMHSQLEHRPSQRSSSPV. Positions 940–985 are interaction with LSM14A; sequence QLEHRPSQRSSSPVGLAKWFGSDVLQQPLPSMPAKVISVDELEYRQ.

It belongs to the 4E-T/EIF4E-T family. Interacts (via YXXXXLphi motif) with EIF4E. Interacts (via YXXXXLphi motif) with EIF4E2. Interacts with DDX6. Interacts with CSDE1/UNR. Interacts with CNOT1; promoting association with the CCR4-NOT complex. Interacts with LSM14A; promoting EIF4ENIF1 localization to P-bodies. Interacts with PATL1. Interacts with importin beta only in the presence of importin alpha, suggesting a direct interaction with importin alpha. Interacts with APOBEC3G in an RNA-dependent manner. Post-translationally, phosphorylation by MAPK8/JNK1 and or MAPK9/JNK2 in response to oxidative stress promotes P-body assembly. Phosphorylated during meiotic maturation. In terms of tissue distribution, widely expressed.

It localises to the cytoplasm. It is found in the P-body. Its subcellular location is the nucleus. The protein localises to the PML body. The protein resides in the nucleus speckle. Its function is as follows. EIF4E-binding protein that regulates translation and stability of mRNAs in processing bodies (P-bodies). Plays a key role in P-bodies to coordinate the storage of translationally inactive mRNAs in the cytoplasm and prevent their degradation. Acts as a binding platform for multiple RNA-binding proteins: promotes deadenylation of mRNAs via its interaction with the CCR4-NOT complex, and blocks decapping via interaction with eIF4E (EIF4E and EIF4E2), thereby protecting deadenylated and repressed mRNAs from degradation. Component of a multiprotein complex that sequesters and represses translation of proneurogenic factors during neurogenesis. Promotes miRNA-mediated translational repression. Required for the formation of P-bodies. Involved in mRNA translational repression mediated by the miRNA effector TNRC6B by protecting TNRC6B-targeted mRNAs from decapping and subsequent decay. Also acts as a nucleoplasmic shuttling protein, which mediates the nuclear import of EIF4E and DDX6 by a piggy-back mechanism. This chain is Eukaryotic translation initiation factor 4E transporter, found in Homo sapiens (Human).